A 297-amino-acid polypeptide reads, in one-letter code: N-acetylmuramoyl-L-alanine amidase XlyA (297 aa).

Residues 1–44 form the signal peptide; the sequence is MVNIIQDFIPVGANNRPGYAMTPLYITVHNTANTAVGADAAAHA. Positions 45-140 constitute an N-acetylmuramoyl-L-alanine amidase domain; that stretch reads RYLKNPDTTT…KYWSGKECPR (96 aa). Residues 159–203 form the LysM domain; it reads QTYVVKQGDTLTSIARAFGVTVAQLQEWNNIEDPNLIRVGQVLIV.

It belongs to the N-acetylmuramoyl-L-alanine amidase 2 family.

It localises to the secreted. It carries out the reaction Hydrolyzes the link between N-acetylmuramoyl residues and L-amino acid residues in certain cell-wall glycopeptides.. In terms of biological role, autolysins are involved in some important biological processes such as cell separation, cell-wall turnover, competence for genetic transformation, formation of the flagella and sporulation. The polypeptide is N-acetylmuramoyl-L-alanine amidase XlyA (xlyA) (Bacillus subtilis (strain 168)).